The following is a 261-amino-acid chain: Cytochrome c oxidase subunit 3 (261 aa).

Topologically, residues 1–15 (MVHQSHAYHMLKPSP) are mitochondrial matrix. The helical transmembrane segment at 16-34 (WPLTGALSALLMTSGLAMW) threads the bilayer. Residues 35–40 (FHFHST) are Mitochondrial intermembrane-facing. A helical transmembrane segment spans residues 41–66 (TLLLTGMLTNALTMYQWWRDVVREST). The Mitochondrial matrix segment spans residues 67-72 (YQGHHT). Residues 73–105 (LPVQKGLRYGMILFITSEVFFFAGFFWAFYHSS) traverse the membrane as a helical segment. Topologically, residues 106–128 (LAPTPQLGGHWPPTGITPLNPLE) are mitochondrial intermembrane. Residues 129–152 (VPLLNTAVLLASGVSITWAHHSLM) form a helical membrane-spanning segment. Residues 153-155 (ENN) are Mitochondrial matrix-facing. The chain crosses the membrane as a helical span at residues 156-183 (RTQMIQALLITILLGIYFTLLQASEYIE). Topologically, residues 184–190 (APFTISD) are mitochondrial intermembrane. Residues 191-223 (GIYGSTFFMTTGFHGLHVIIGSTFLTVCLSCQL) form a helical membrane-spanning segment. At 224–232 (LFHFTSKHH) the chain is on the mitochondrial matrix side. A helical membrane pass occupies residues 233 to 256 (FGFEAAAWYWHFVDVVWLFLYVSI). Over 257 to 261 (YWWGS) the chain is Mitochondrial intermembrane.

This sequence belongs to the cytochrome c oxidase subunit 3 family. As to quaternary structure, component of the cytochrome c oxidase (complex IV, CIV), a multisubunit enzyme composed of 14 subunits. The complex is composed of a catalytic core of 3 subunits MT-CO1, MT-CO2 and MT-CO3, encoded in the mitochondrial DNA, and 11 supernumerary subunits COX4I, COX5A, COX5B, COX6A, COX6B, COX6C, COX7A, COX7B, COX7C, COX8 and NDUFA4, which are encoded in the nuclear genome. The complex exists as a monomer or a dimer and forms supercomplexes (SCs) in the inner mitochondrial membrane with NADH-ubiquinone oxidoreductase (complex I, CI) and ubiquinol-cytochrome c oxidoreductase (cytochrome b-c1 complex, complex III, CIII), resulting in different assemblies (supercomplex SCI(1)III(2)IV(1) and megacomplex MCI(2)III(2)IV(2)).

The protein localises to the mitochondrion inner membrane. The catalysed reaction is 4 Fe(II)-[cytochrome c] + O2 + 8 H(+)(in) = 4 Fe(III)-[cytochrome c] + 2 H2O + 4 H(+)(out). In terms of biological role, component of the cytochrome c oxidase, the last enzyme in the mitochondrial electron transport chain which drives oxidative phosphorylation. The respiratory chain contains 3 multisubunit complexes succinate dehydrogenase (complex II, CII), ubiquinol-cytochrome c oxidoreductase (cytochrome b-c1 complex, complex III, CIII) and cytochrome c oxidase (complex IV, CIV), that cooperate to transfer electrons derived from NADH and succinate to molecular oxygen, creating an electrochemical gradient over the inner membrane that drives transmembrane transport and the ATP synthase. Cytochrome c oxidase is the component of the respiratory chain that catalyzes the reduction of oxygen to water. Electrons originating from reduced cytochrome c in the intermembrane space (IMS) are transferred via the dinuclear copper A center (CU(A)) of subunit 2 and heme A of subunit 1 to the active site in subunit 1, a binuclear center (BNC) formed by heme A3 and copper B (CU(B)). The BNC reduces molecular oxygen to 2 water molecules using 4 electrons from cytochrome c in the IMS and 4 protons from the mitochondrial matrix. The chain is Cytochrome c oxidase subunit 3 (MT-CO3) from Pongo pygmaeus (Bornean orangutan).